The primary structure comprises 652 residues: 2-oxoglutarate carboxylase large subunit (652 aa).

Residues Ile26–Asp288 form the Pyruvate carboxyltransferase domain. Substrate-binding positions include Arg34–Gln38 and Arg105. Asp35 contacts a divalent metal cation. Residues Lys196, His227, and His229 each contribute to the a divalent metal cation site. N6-carboxylysine is present on Lys196. Thr362 is a substrate binding site. Residues Ala563–Lys643 enclose the Biotinyl-binding domain. An N6-biotinyllysine modification is found at Lys609.

Heterohexadecamer of 8 large subunits and 8 small subunits. The cofactor is Mg(2+). Mn(2+) serves as cofactor. It depends on Co(2+) as a cofactor. In terms of processing, biotinylated.

It carries out the reaction hydrogencarbonate + 2-oxoglutarate + ATP = (S)-oxalosuccinate + ADP + phosphate + H(+). This chain is 2-oxoglutarate carboxylase large subunit, found in Hydrogenobacter thermophilus (strain DSM 6534 / IAM 12695 / TK-6).